The sequence spans 776 residues: Kinesin-like protein KLP1 (776 aa).

The Kinesin motor domain maps to 5–335 (AVKVFVRTRP…LRFASRVRTL (331 aa)). 91–98 (GQTGAGKT) is an ATP binding site. A coiled-coil region spans residues 348–371 (ALLLRRYERQIKELKAELAMRDTL). Residues 441 to 535 (RRATEEGSGA…SNWGDAGPLS (95 aa)) form a disordered region. Residues 447–460 (GSGAAARGGDSAGP) show a composition bias toward low complexity. The stretch at 579–657 (ALADTKASIR…SLKSAREELE (79 aa)) forms a coiled coil. The tract at residues 658 to 776 (PQIQAVAVAR…TQAVNRGLAR (119 aa)) is globular.

It belongs to the TRAFAC class myosin-kinesin ATPase superfamily. Kinesin family.

The protein localises to the cytoplasm. The protein resides in the cytoskeleton. It is found in the flagellum axoneme. May play a role in rotation or twisting of the central pair microtubules of the flagella axoneme. The protein is Kinesin-like protein KLP1 (KLP1) of Chlamydomonas reinhardtii (Chlamydomonas smithii).